The following is a 205-amino-acid chain: Large ribosomal subunit protein uL4 (205 aa).

The tract at residues 43 to 78 (ARAGTKAQKTRSEVAGGGKKPWRQKGTGNARAGTIR) is disordered.

This sequence belongs to the universal ribosomal protein uL4 family. In terms of assembly, part of the 50S ribosomal subunit.

Functionally, one of the primary rRNA binding proteins, this protein initially binds near the 5'-end of the 23S rRNA. It is important during the early stages of 50S assembly. It makes multiple contacts with different domains of the 23S rRNA in the assembled 50S subunit and ribosome. Its function is as follows. Forms part of the polypeptide exit tunnel. In Halorhodospira halophila (strain DSM 244 / SL1) (Ectothiorhodospira halophila (strain DSM 244 / SL1)), this protein is Large ribosomal subunit protein uL4.